Reading from the N-terminus, the 281-residue chain is Ribosomal RNA small subunit methyltransferase A (281 aa).

S-adenosyl-L-methionine is bound by residues Asn-25, Leu-27, Gly-52, Glu-73, Asp-99, and Asn-118.

Belongs to the class I-like SAM-binding methyltransferase superfamily. rRNA adenine N(6)-methyltransferase family. RsmA subfamily.

The protein localises to the cytoplasm. It catalyses the reaction adenosine(1518)/adenosine(1519) in 16S rRNA + 4 S-adenosyl-L-methionine = N(6)-dimethyladenosine(1518)/N(6)-dimethyladenosine(1519) in 16S rRNA + 4 S-adenosyl-L-homocysteine + 4 H(+). Its function is as follows. Specifically dimethylates two adjacent adenosines (A1518 and A1519) in the loop of a conserved hairpin near the 3'-end of 16S rRNA in the 30S particle. May play a critical role in biogenesis of 30S subunits. The polypeptide is Ribosomal RNA small subunit methyltransferase A (Erythrobacter litoralis (strain HTCC2594)).